Here is a 63-residue protein sequence, read N- to C-terminus: Bowman-Birk type proteinase inhibitor (63 aa).

7 disulfides stabilise this stretch: cysteine 8/cysteine 61, cysteine 9/cysteine 24, cysteine 12/cysteine 57, cysteine 14/cysteine 22, cysteine 31/cysteine 38, cysteine 35/cysteine 50, and cysteine 40/cysteine 48.

It belongs to the Bowman-Birk serine protease inhibitor family.

In terms of biological role, this inhibitor has two domains, each with separate antiprotease activity. Inhibits bovine trypsin and chymotrypsin, in a molar ratio of 1:1. The trypsin inhibition of FBI is independent of chymotrypsin inhibition, but the chymotrypsin inhibition is not completely independent of trypsin inhibition. This is Bowman-Birk type proteinase inhibitor from Vicia faba (Broad bean).